A 395-amino-acid polypeptide reads, in one-letter code: Carbamoyl phosphate synthase small chain (395 aa).

Positions methionine 1–glycine 192 are CPSase. Serine 50, glycine 244, and glycine 246 together coordinate L-glutamine. The Glutamine amidotransferase type-1 domain occupies lysine 196–tyrosine 383. Cysteine 273 functions as the Nucleophile in the catalytic mechanism. The L-glutamine site is built by methionine 274, glutamine 277, asparagine 313, glycine 315, and phenylalanine 316. Active-site residues include histidine 356 and glutamate 358.

Belongs to the CarA family. Composed of two chains; the small (or glutamine) chain promotes the hydrolysis of glutamine to ammonia, which is used by the large (or ammonia) chain to synthesize carbamoyl phosphate. Tetramer of heterodimers (alpha,beta)4.

It is found in the plastid. It localises to the chloroplast. The catalysed reaction is hydrogencarbonate + L-glutamine + 2 ATP + H2O = carbamoyl phosphate + L-glutamate + 2 ADP + phosphate + 2 H(+). It carries out the reaction L-glutamine + H2O = L-glutamate + NH4(+). The protein operates within amino-acid biosynthesis; L-arginine biosynthesis; carbamoyl phosphate from bicarbonate: step 1/1. It participates in pyrimidine metabolism; UMP biosynthesis via de novo pathway; (S)-dihydroorotate from bicarbonate: step 1/3. In terms of biological role, small subunit of the glutamine-dependent carbamoyl phosphate synthetase (CPSase). CPSase catalyzes the formation of carbamoyl phosphate from the ammonia moiety of glutamine, carbonate, and phosphate donated by ATP, constituting the first step of 2 biosynthetic pathways, one leading to arginine and/or urea and the other to pyrimidine nucleotides. The small subunit (glutamine amidotransferase) binds and cleaves glutamine to supply the large subunit with the substrate ammonia. The sequence is that of Carbamoyl phosphate synthase small chain from Gracilaria tenuistipitata var. liui (Red alga).